We begin with the raw amino-acid sequence, 241 residues long: Triosephosphate isomerase (241 aa).

9 to 11 (NWK) serves as a coordination point for substrate. The active-site Electrophile is H96. E165 (proton acceptor) is an active-site residue. Substrate is bound by residues G171, S204, and 225–226 (GG).

The protein belongs to the triosephosphate isomerase family. In terms of assembly, homodimer.

The protein resides in the cytoplasm. It catalyses the reaction D-glyceraldehyde 3-phosphate = dihydroxyacetone phosphate. The protein operates within carbohydrate biosynthesis; gluconeogenesis. Its pathway is carbohydrate degradation; glycolysis; D-glyceraldehyde 3-phosphate from glycerone phosphate: step 1/1. In terms of biological role, involved in the gluconeogenesis. Catalyzes stereospecifically the conversion of dihydroxyacetone phosphate (DHAP) to D-glyceraldehyde-3-phosphate (G3P). This is Triosephosphate isomerase from Prochlorococcus marinus (strain MIT 9515).